Here is a 150-residue protein sequence, read N- to C-terminus: MDSLDAEQLSALQKAFDSFDTDSKGFITPETVGVILRMMGVKISEKNLQEVISETDEDGSGELEFEEFVELAAKFLIEEDEEALKAELREAFRVYDRGGNGYITTDVLKEILRELDNRLTEEDLDSIIEEVDEDGSGTLDFNEFMQMMNG.

Residue M1 is modified to N-acetylmethionine. EF-hand domains are found at residues 7 to 42 (EQLS…MGVK), 43 to 78 (ISEK…FLIE), 83 to 118 (ALKA…LDNR), and 119 to 150 (LTEE…MMNG). Residues D56, D58, S60, E62, and E67 each contribute to the Ca(2+) site. Ca(2+) contacts are provided by D132, D134, S136, T138, and E143.

This sequence belongs to the troponin C family.

Troponin is the central regulatory protein of striated muscle contraction. Tn consists of three components: Tn-I which is the inhibitor of actomyosin ATPase, Tn-T which contains the binding site for tropomyosin and Tn-C. The binding of calcium to Tn-C abolishes the inhibitory action of Tn on actin filaments. In Homarus americanus (American lobster), this protein is Troponin C, isoform 2B.